The sequence spans 286 residues: Nucleotide-binding protein VC0395_A2112/VC395_2645 (286 aa).

Residue 8-15 coordinates ATP; the sequence is GQSGAGKS. GTP is bound at residue 56–59; the sequence is DIRN.

The protein belongs to the RapZ-like family.

Functionally, displays ATPase and GTPase activities. The sequence is that of Nucleotide-binding protein VC0395_A2112/VC395_2645 from Vibrio cholerae serotype O1 (strain ATCC 39541 / Classical Ogawa 395 / O395).